The primary structure comprises 924 residues: Protein translocase subunit SecA (924 aa).

Residues glutamine 87, 105–109 (GEGKT), and aspartate 515 each bind ATP. Residues cysteine 908, cysteine 910, cysteine 919, and histidine 920 each coordinate Zn(2+).

The protein belongs to the SecA family. Monomer and homodimer. Part of the essential Sec protein translocation apparatus which comprises SecA, SecYEG and auxiliary proteins SecDF-YajC and YidC. Requires Zn(2+) as cofactor.

The protein localises to the cell inner membrane. Its subcellular location is the cytoplasm. It carries out the reaction ATP + H2O + cellular proteinSide 1 = ADP + phosphate + cellular proteinSide 2.. Part of the Sec protein translocase complex. Interacts with the SecYEG preprotein conducting channel. Has a central role in coupling the hydrolysis of ATP to the transfer of proteins into and across the cell membrane, serving both as a receptor for the preprotein-SecB complex and as an ATP-driven molecular motor driving the stepwise translocation of polypeptide chains across the membrane. This chain is Protein translocase subunit SecA, found in Cupriavidus pinatubonensis (strain JMP 134 / LMG 1197) (Cupriavidus necator (strain JMP 134)).